The following is a 300-amino-acid chain: Acetaldehyde dehydrogenase 3 (300 aa).

Residue 11-14 participates in NAD(+) binding; that stretch reads SGNI. The Acyl-thioester intermediate role is filled by Cys126. Residues 157-165 and Asn276 contribute to the NAD(+) site; that span reads SAGPGTRAN.

Belongs to the acetaldehyde dehydrogenase family.

It carries out the reaction acetaldehyde + NAD(+) + CoA = acetyl-CoA + NADH + H(+). This is Acetaldehyde dehydrogenase 3 from Rhodococcus opacus (strain B4).